Consider the following 598-residue polypeptide: Elongation factor 4 (598 aa).

One can recognise a tr-type G domain in the interval 4 to 185; the sequence is KNIRNFSIIA…TIIAKIPPPK (182 aa). GTP-binding positions include 16-21 and 132-135; these read DHGKST and NKID.

Belongs to the TRAFAC class translation factor GTPase superfamily. Classic translation factor GTPase family. LepA subfamily.

It is found in the cell membrane. The enzyme catalyses GTP + H2O = GDP + phosphate + H(+). In terms of biological role, required for accurate and efficient protein synthesis under certain stress conditions. May act as a fidelity factor of the translation reaction, by catalyzing a one-codon backward translocation of tRNAs on improperly translocated ribosomes. Back-translocation proceeds from a post-translocation (POST) complex to a pre-translocation (PRE) complex, thus giving elongation factor G a second chance to translocate the tRNAs correctly. Binds to ribosomes in a GTP-dependent manner. The sequence is that of Elongation factor 4 from Mycoplasma genitalium (strain ATCC 33530 / DSM 19775 / NCTC 10195 / G37) (Mycoplasmoides genitalium).